The sequence spans 120 residues: Large ribosomal subunit protein uL18 (120 aa).

Belongs to the universal ribosomal protein uL18 family. Part of the 50S ribosomal subunit; part of the 5S rRNA/L5/L18/L25 subcomplex. Contacts the 5S and 23S rRNAs.

This is one of the proteins that bind and probably mediate the attachment of the 5S RNA into the large ribosomal subunit, where it forms part of the central protuberance. The chain is Large ribosomal subunit protein uL18 from Rhodopseudomonas palustris (strain BisB18).